Reading from the N-terminus, the 477-residue chain is Cytochrome c oxidase subunit 1 (477 aa).

A helical membrane pass occupies residues 16 to 36 (VGTMYLMLGMWSGFGGLNLSW). Ca(2+) contacts are provided by Glu41 and Gly46. His62 contributes to the Fe(II)-heme a binding site. Helical transmembrane passes span 64 to 84 (IMMIFSFVMPVLIGGFGNWLL), 101 to 121 (FSFWVLPPALYLVIVSCFIDY), 149 to 171 (ILGLHLAGISSSAESINYLVTFL), 185 to 205 (LFVWALAVTSFLLLVSLPVLA), 236 to 256 (LFWFFGHPEVYVLILPGFGLV), and 269 to 289 (VFGSVAMMYAMISIGVLGFIV). His242 serves as a coordination point for Cu cation. The 1'-histidyl-3'-tyrosine (His-Tyr) cross-link spans 242-246 (HPEVY). An O2-binding site is contributed by Tyr246. Cu cation contacts are provided by His292 and His293. The next 2 membrane-spanning stretches (helical) occupy residues 309–329 (AVTMLIAVPTGVKVFSWIATI) and 340–360 (TLWVLGFIMKFTMGGITGVIL). Mg(2+) is bound by residues His370 and Asp371. Heme a3 is bound at residue His378. Fe(II)-heme a is bound at residue His380. 2 helical membrane-spanning segments follow: residues 382–402 (VLSMGAVFTIFAGYIHYFPFF) and 416–436 (FFLTFVGVNLTFFPQHFLGLG). Pro443 serves as a coordination point for Ca(2+). A helical transmembrane segment spans residues 455 to 475 (WSTIGCAMVMVSVSLFIHMQW).

This sequence belongs to the heme-copper respiratory oxidase family. In terms of assembly, component of the cytochrome c oxidase (complex IV, CIV), a multisubunit enzyme composed of a catalytic core of 3 subunits and several supernumerary subunits. The complex exists as a monomer or a dimer and forms supercomplexes (SCs) in the inner mitochondrial membrane with ubiquinol-cytochrome c oxidoreductase (cytochrome b-c1 complex, complex III, CIII). The cofactor is heme. Cu cation serves as cofactor.

It localises to the mitochondrion inner membrane. The enzyme catalyses 4 Fe(II)-[cytochrome c] + O2 + 8 H(+)(in) = 4 Fe(III)-[cytochrome c] + 2 H2O + 4 H(+)(out). The protein operates within energy metabolism; oxidative phosphorylation. In terms of biological role, component of the cytochrome c oxidase, the last enzyme in the mitochondrial electron transport chain which drives oxidative phosphorylation. The respiratory chain contains 3 multisubunit complexes succinate dehydrogenase (complex II, CII), ubiquinol-cytochrome c oxidoreductase (cytochrome b-c1 complex, complex III, CIII) and cytochrome c oxidase (complex IV, CIV), that cooperate to transfer electrons derived from NADH and succinate to molecular oxygen, creating an electrochemical gradient over the inner membrane that drives transmembrane transport and the ATP synthase. Cytochrome c oxidase is the component of the respiratory chain that catalyzes the reduction of oxygen to water. Electrons originating from reduced cytochrome c in the intermembrane space (IMS) are transferred via the dinuclear copper A center (CU(A)) of subunit 2 and heme A of subunit 1 to the active site in subunit 1, a binuclear center (BNC) formed by heme A3 and copper B (CU(B)). The BNC reduces molecular oxygen to 2 water molecules using 4 electrons from cytochrome c in the IMS and 4 protons from the mitochondrial matrix. In Pecten maximus (King scallop), this protein is Cytochrome c oxidase subunit 1 (COI).